The sequence spans 360 residues: SPRY domain-containing SOCS box protein 3 (360 aa).

The segment at 20 to 55 is disordered; that stretch reads RDQDARSPTLPAEEEAWGYDSDGQHSNSDSDTDLLH. The region spanning 85–274 is the B30.2/SPRY domain; that stretch reads LHTFHQIKSC…MKVIRSCCCR (190 aa). The region spanning 264 to 315 is the SOCS box domain; it reads SMKVIRSCCCRTSLQYLCCARLRQLLPDSVDSLEVLPLPPGLKQVLGNKLGW. Residues 323 to 350 form a disordered region; sequence RSNQHKGDTSATTSCGSDSDSSCTPGQD. Positions 331-346 are enriched in low complexity; the sequence is TSATTSCGSDSDSSCT.

It belongs to the SPSB family. Substrate-recognition component of the ECS(SPSB3) complex, composed of spsb3, cul5, elob, elob and rnf7/rbx2.

Its subcellular location is the nucleus. It functions in the pathway protein modification; protein ubiquitination. In terms of biological role, substrate-recognition component of a cullin-5-RING E3 ubiquitin-protein ligase complex (ECS complex, also named CRL5 complex), which mediates the ubiquitination and subsequent proteasomal degradation of target proteins. The chain is SPRY domain-containing SOCS box protein 3 (spsb3) from Xenopus tropicalis (Western clawed frog).